An 863-amino-acid polypeptide reads, in one-letter code: MGCVKLVFFMLYVFLFQLVSSSSLPHLCPEDQALALLQFKNMFTVNPNAFHYCPDITGREIQSYPRTLSWNKSTSCCSWDGVHCDETTGQVIALDLRCSQLQGKFHSNSSLFQLSNLKRLDLSNNNFIGSLISPKFGEFSDLTHLDLSDSSFTGVIPSEISHLSKLHVLLIGDQYGLSIVPHNFEPLLKNLTQLRELNLYEVNLSSTVPSNFSSHLTTLQLSGTGLRGLLPERVFHLSDLEFLDLSYNSQLMVRFPTTKWNSSASLMKLYVHSVNIADRIPESFSHLTSLHELDMGYTNLSGPIPKPLWNLTNIESLDLRYNHLEGPIPQLPIFEKLKKLSLFRNDNLDGGLEFLSFNTQLERLDLSSNSLTGPIPSNISGLQNLECLYLSSNHLNGSIPSWIFSLPSLVELDLSNNTFSGKIQEFKSKTLSAVTLKQNKLKGRIPNSLLNQKNLQLLLLSHNNISGHISSAICNLKTLILLDLGSNNLEGTIPQCVVERNEYLSHLDLSKNRLSGTINTTFSVGNILRVISLHGNKLTGKVPRSMINCKYLTLLDLGNNMLNDTFPNWLGYLFQLKILSLRSNKLHGPIKSSGNTNLFMGLQILDLSSNGFSGNLPERILGNLQTMKEIDESTGFPEYISDPYDIYYNYLTTISTKGQDYDSVRILDSNMIINLSKNRFEGHIPSIIGDLVGLRTLNLSHNVLEGHIPASFQNLSVLESLDLSSNKISGEIPQQLASLTFLEVLNLSHNHLVGCIPKGKQFDSFGNTSYQGNDGLRGFPLSKLCGGEDQVTTPAELDQEEEEEDSPMISWQGVLVGYGCGLVIGLSVIYIMWSTQYPAWFSRMDLKLEHIITTKMKKHKKRY.

An N-terminal signal peptide occupies residues 1 to 21 (MGCVKLVFFMLYVFLFQLVSS). Residues 22 to 812 (SSLPHLCPED…EEDSPMISWQ (791 aa)) lie on the Extracellular side of the membrane. The N-cap stretch occupies residues 24-90 (LPHLCPEDQA…GVHCDETTGQ (67 aa)). 2 N-linked (GlcNAc...) asparagine glycosylation sites follow: Asn-71 and Asn-108. An LRR 1; degenerate repeat occupies 91–114 (VIALDLRCSQLQGKFHSNSSLFQL). LRR repeat units lie at residues 115-138 (SNLKRLDLSNNNFIGSLISPKFGE) and 140-163 (SDLTHLDLSDSSFTGVIPSEISHL). One copy of the LRR 4; degenerate repeat lies at 164–190 (SKLHVLLIGDQYGLSIVPHNFEPLLKN). Asn-190, Asn-203, and Asn-211 each carry an N-linked (GlcNAc...) asparagine glycan. LRR repeat units lie at residues 191–213 (LTQLRELNLYEVNLSSTVPSNFS), 214–237 (SHLTTLQLSGTGLRGLLPERVFHL), 240–262 (LEFLDLSYNSQLMVRFPTTKWNS), 264–286 (ASLMKLYVHSVNIADRIPESFSH), 287–311 (LTSLHELDMGYTNLSGPIPKPLWNL), and 312–336 (TNIESLDLRYNHLEGPIPQLPIFEK). Asn-261 carries an N-linked (GlcNAc...) asparagine glycan. 2 N-linked (GlcNAc...) asparagine glycosylation sites follow: Asn-299 and Asn-310. An LRR 11; degenerate repeat occupies 337–357 (LKKLSLFRNDNLDGGLEFLSF). LRR repeat units lie at residues 358–382 (NTQLERLDLSSNSLTGPIPSNISGL), 383–406 (QNLECLYLSSNHLNGSIPSWIFSL), 408–428 (SLVELDLSNNTFSGKIQEFKS), 429–452 (KTLSAVTLKQNKLKGRIPNSLLNQ), 454–476 (NLQLLLLSHNNISGHISSAICNL), 477–500 (KTLILLDLGSNNLEGTIPQCVVER), 502–524 (EYLSHLDLSKNRLSGTINTTFSV), 525–549 (GNILRVISLHGNKLTGKVPRSMINC), 551–572 (YLTLLDLGNNMLNDTFPNWLGY), 573–597 (LFQLKILSLRSNKLHGPIKSSGNTN), 599–623 (FMGLQILDLSSNGFSGNLPERILGN), 667–690 (LDSNMIINLSKNRFEGHIPSIIGD), 691–714 (LVGLRTLNLSHNVLEGHIPASFQN), 715–739 (LSVLESLDLSSNKISGEIPQQLASL), and 741–759 (FLEVLNLSHNHLVGCIPKG). N-linked (GlcNAc...) asparagine glycans are attached at residues Asn-378, Asn-396, and Asn-416. The N-linked (GlcNAc...) asparagine glycan is linked to Asn-464. Asn-519 carries N-linked (GlcNAc...) asparagine glycosylation. Asn-563 carries an N-linked (GlcNAc...) asparagine glycan. Residues Asn-674, Asn-698, and Asn-714 are each glycosylated (N-linked (GlcNAc...) asparagine). 2 N-linked (GlcNAc...) asparagine glycosylation sites follow: Asn-746 and Asn-767. The segment at 760–812 (KQFDSFGNTSYQGNDGLRGFPLSKLCGGEDQVTTPAELDQEEEEEDSPMISWQ) is C-cap/acidic domain. The helical transmembrane segment at 813–833 (GVLVGYGCGLVIGLSVIYIMW) threads the bilayer. At 834 to 863 (STQYPAWFSRMDLKLEHIITTKMKKHKKRY) the chain is on the cytoplasmic side.

The protein belongs to the RLP family.

The protein resides in the cell membrane. Involved in plant defense. Confers resistance to the fungal pathogen C.fulvum through recognition of the AVR9 elicitor protein. The protein is Receptor-like protein 9DC1 of Solanum pimpinellifolium (Currant tomato).